Here is a 438-residue protein sequence, read N- to C-terminus: GTPase Obg (438 aa).

In terms of domain architecture, Obg spans 2 to 160 (SMFLDQVTID…RKIELELKVL (159 aa)). The tract at residues 128–147 (NIRFASPRNPAPEIAENGEP) is disordered. The region spanning 161–339 (ADVGLVGFPS…LLNATADLLE (179 aa)) is the OBG-type G domain. Residues 167–174 (GFPSVGKS), 192–196 (FTTLV), 214–217 (DLPG), 284–287 (NKMD), and 320–322 (SGV) each bind GTP. Serine 174 and threonine 194 together coordinate Mg(2+). An OCT domain is found at 360–438 (GFQPEGPEFT…IGNFEFEFVE (79 aa)).

It belongs to the TRAFAC class OBG-HflX-like GTPase superfamily. OBG GTPase family. In terms of assembly, monomer. The cofactor is Mg(2+).

Its subcellular location is the cytoplasm. An essential GTPase which binds GTP, GDP and possibly (p)ppGpp with moderate affinity, with high nucleotide exchange rates and a fairly low GTP hydrolysis rate. Plays a role in control of the cell cycle, stress response, ribosome biogenesis and in those bacteria that undergo differentiation, in morphogenesis control. The protein is GTPase Obg of Enterococcus faecalis (strain ATCC 700802 / V583).